We begin with the raw amino-acid sequence, 167 residues long: Golgin subfamily A member 7B (167 aa).

2 S-palmitoyl cysteine lipidation sites follow: C78 and C81. The segment at 140-167 is disordered; the sequence is RCSSGSSSSGSSSGSGSSSAGGGGAGAR. Low complexity predominate over residues 142 to 157; that stretch reads SSGSSSSGSSSGSGSS. The span at 158–167 shows a compositional bias: gly residues; that stretch reads SAGGGGAGAR.

The protein belongs to the ERF4 family. In terms of processing, palmitoylated by ZDHHC5. Palmitoylation is required for the maintenance of ZDHHC5 at the plasma membrane.

Its subcellular location is the cell membrane. It localises to the golgi apparatus membrane. Functionally, play a role in cell adhesion by regulating the plasma membrane localization of the palmitoyltransferase ZDHHC5. May be involved in protein transport from Golgi to cell surface. This chain is Golgin subfamily A member 7B (GOLGA7B), found in Mus musculus (Mouse).